Reading from the N-terminus, the 638-residue chain is Probable glycerol-3-phosphate dehydrogenase, mitochondrial (638 aa).

100–128 (DLIVIGGGATGTGVALDAQSRGMKVALFE) is a binding site for FAD.

This sequence belongs to the FAD-dependent glycerol-3-phosphate dehydrogenase family. It depends on FAD as a cofactor.

It localises to the mitochondrion. It carries out the reaction a quinone + sn-glycerol 3-phosphate = dihydroxyacetone phosphate + a quinol. The protein operates within polyol metabolism; glycerol degradation via glycerol kinase pathway; glycerone phosphate from sn-glycerol 3-phosphate (anaerobic route): step 1/1. In Dictyostelium discoideum (Social amoeba), this protein is Probable glycerol-3-phosphate dehydrogenase, mitochondrial.